A 198-amino-acid chain; its full sequence is NAD(P)H dehydrogenase (quinone) (198 aa).

Residues 4-189 (VLVLYYSMYG…SIARYQGEYV (186 aa)) enclose the Flavodoxin-like domain. Residues 10–15 (SMYGHI) and 78–80 (TRF) contribute to the FMN site. An NAD(+)-binding site is contributed by tyrosine 12. Tryptophan 98 contributes to the substrate binding site. FMN contacts are provided by residues 113–118 (STGTGG) and histidine 133.

It belongs to the WrbA family. FMN serves as cofactor.

The catalysed reaction is a quinone + NADH + H(+) = a quinol + NAD(+). It catalyses the reaction a quinone + NADPH + H(+) = a quinol + NADP(+). This Escherichia coli O157:H7 protein is NAD(P)H dehydrogenase (quinone).